Here is a 743-residue protein sequence, read N- to C-terminus: MKKHPLHMLGRLVAGKNTQWITLSVWILITLLLSFTLPQVNSTKEPNPKNLPETAMSQQAEALMKKEFPNNAGNPLLVVWYRDGGLQSQDYKLIQDVYKELKASPLKEQSTLPPFDTIPEQVLSKSASKDGTSFVTPVFFNKSAGTDILKENLDDLRNIVNSKVDEDPFKRKINDAGLHVRLSGPVGIQTDAVSLFSQADVKLLVATVLLVLVLLILLYRSPILAILPLLVVGFAYGIISPTLGFLADHGWIKVDAQAISIMTVLLFGAGTDYCLFLISRYREYLLEEESKYKALQLAIKASGGAIIMSALTVVLGLGTLLLAHYGAFHRFAVPFSVAVFIMGIAALTILPAFLLIFGRTAFFPFIPRTTSMNEELARRKKKVVKVKKSKGAFSKKLGDVVVRRPWTIIMLTVFVLGGLASFVPRIQYTYDLLESFPKDMPSREGFTLISDHFSAGELAPVKVIVDTKGKELPIKEELEKFSFVNTVKDPKEGKENKQIQMYEVSLAENPYSIEALDQIPKLKNSVEKVFKDAGISNAEDQLWIGGETASLYDTKQITERDEAVIIPVMISIIALLLLVYLRSIVAMIYLIVTVVLSFFSALGAGWLLLHYGMGAPAIQGAIPLYAFVFLVALGEDYNIFMVSEIWKNRKTQNHLDAVKNGVIQTGSVITSAGLILAGTFAVLGTLPIQVLVQFGIVTAIGVLLDTFIVRPLLVPAITVVLGRFAFWPGKLSRKSEEVQKVDA.

12 helical membrane passes run 20 to 40 (WITL…LPQV), 199 to 219 (ADVK…ILLY), 223 to 243 (ILAI…SPTL), 258 to 278 (AISI…LFLI), 303 to 323 (GGAI…LLLA), 337 to 357 (VAVF…LLIF), 406 to 426 (WTII…VPRI), 561 to 581 (DEAV…LVYL), 584 to 604 (IVAM…ALGA), 613 to 633 (MGAP…LVAL), 672 to 692 (AGLI…QVLV), and 694 to 714 (FGIV…PLLV).

It belongs to the resistance-nodulation-cell division (RND) (TC 2.A.6) family. MmpL subfamily.

It is found in the cell membrane. Functionally, exports the siderophore petrobactin. The polypeptide is Apo-petrobactin exporter (Bacillus anthracis).